The sequence spans 421 residues: Inhibitor of growth protein 3 (421 aa).

Positions 129 to 164 (PSQPVNNHHAHSHTPVEKRKYNPTSHHTATDHIPEK) are disordered. Residues Lys-148, Lys-165, and Lys-167 each participate in a glycyl lysine isopeptide (Lys-Gly) (interchain with G-Cter in SUMO2) cross-link. Lys-181 is modified (N6-acetyllysine). Lys-256 is covalently cross-linked (Glycyl lysine isopeptide (Lys-Gly) (interchain with G-Cter in SUMO2)). Residue Lys-264 is modified to N6-acetyllysine. The tract at residues 286-324 (TQNASSSAADSRSGRKSKNNTKSSSQQSSSSSSSSSSSS) is disordered. Residues 308–324 (SSSQQSSSSSSSSSSSS) are compositionally biased toward low complexity. The segment at 363 to 412 (PRYCICNQVSYGEMVGCDNQDCPIEWFHYGCVGLTEAPKGKWFCPQCTAA) adopts a PHD-type zinc-finger fold. Zn(2+) is bound by residues Cys-366, Cys-368, Cys-379, Cys-384, His-390, Cys-393, Cys-406, and Cys-409.

It belongs to the ING family. Interacts with H3K4me3 and to a lesser extent with H3K4me2. Component of the NuA4 histone acetyltransferase complex which contains the catalytic subunit KAT5/TIP60 and the subunits EP400, TRRAP/PAF400, BRD8/SMAP, EPC1, DMAP1/DNMAP1, RUVBL1/TIP49, RUVBL2, ING3, actin, ACTL6A/BAF53A, MORF4L1/MRG15, MORF4L2/MRGX, MRGBP, YEATS4/GAS41, VPS72/YL1 and MEAF6. The NuA4 complex interacts with MYC. HTATTIP/TIP60, EPC1, and ING3 together constitute a minimal HAT complex termed Piccolo NuA4. Component of a SWR1-like complex.

The protein resides in the nucleus. Its function is as follows. Component of the NuA4 histone acetyltransferase (HAT) complex which is involved in transcriptional activation of select genes principally by acetylation of nucleosomal histones H4 and H2A. This modification may both alter nucleosome - DNA interactions and promote interaction of the modified histones with other proteins which positively regulate transcription. This complex may be required for the activation of transcriptional programs associated with oncogene and proto-oncogene mediated growth induction, tumor suppressor mediated growth arrest and replicative senescence, apoptosis, and DNA repair. NuA4 may also play a direct role in DNA repair when directly recruited to sites of DNA damage. Component of a SWR1-like complex that specifically mediates the removal of histone H2A.Z/H2AZ1 from the nucleosome. This is Inhibitor of growth protein 3 (Ing3) from Rattus norvegicus (Rat).